We begin with the raw amino-acid sequence, 180 residues long: Translation initiation factor IF-3 (180 aa).

This sequence belongs to the IF-3 family. Monomer.

Its subcellular location is the cytoplasm. In terms of biological role, IF-3 binds to the 30S ribosomal subunit and shifts the equilibrium between 70S ribosomes and their 50S and 30S subunits in favor of the free subunits, thus enhancing the availability of 30S subunits on which protein synthesis initiation begins. In Pasteurella multocida (strain Pm70), this protein is Translation initiation factor IF-3.